We begin with the raw amino-acid sequence, 647 residues long: Chaperone protein DnaK (647 aa).

A Phosphothreonine; by autocatalysis modification is found at threonine 198. The disordered stretch occupies residues 603–647 (EQAQGAGGAQGFDPNAFQGGDAGQQQKADDGVVDAEFTEVKDDKK). Residues 618–628 (AFQGGDAGQQQ) show a composition bias toward low complexity.

It belongs to the heat shock protein 70 family.

Its function is as follows. Acts as a chaperone. The chain is Chaperone protein DnaK from Acinetobacter baylyi (strain ATCC 33305 / BD413 / ADP1).